The sequence spans 257 residues: GTP cyclohydrolase FolE2 (257 aa).

This sequence belongs to the GTP cyclohydrolase IV family.

It catalyses the reaction GTP + H2O = 7,8-dihydroneopterin 3'-triphosphate + formate + H(+). It functions in the pathway cofactor biosynthesis; 7,8-dihydroneopterin triphosphate biosynthesis; 7,8-dihydroneopterin triphosphate from GTP: step 1/1. In terms of biological role, converts GTP to 7,8-dihydroneopterin triphosphate. This is GTP cyclohydrolase FolE2 from Kosmotoga olearia (strain ATCC BAA-1733 / DSM 21960 / TBF 19.5.1).